The sequence spans 461 residues: Bifunctional protein GlmU (461 aa).

The segment at 1-229 is pyrophosphorylase; the sequence is MNKYVVILAA…FSESLGVNDR (229 aa). UDP-N-acetyl-alpha-D-glucosamine contacts are provided by residues 8–11, lysine 22, glutamine 72, and 77–78; these read LAAG and GT. Mg(2+) is bound at residue aspartate 102. Residues glycine 139, glutamate 154, asparagine 169, and asparagine 227 each contribute to the UDP-N-acetyl-alpha-D-glucosamine site. Asparagine 227 lines the Mg(2+) pocket. The linker stretch occupies residues 230 to 250; that stretch reads IALAQATKIMQRRINEEHMKN. Positions 251 to 461 are N-acetyltransferase; that stretch reads GVSFIDPDTA…LPLSKDKEWE (211 aa). 2 residues coordinate UDP-N-acetyl-alpha-D-glucosamine: arginine 332 and lysine 350. The Proton acceptor role is filled by histidine 362. Tyrosine 365 and asparagine 376 together coordinate UDP-N-acetyl-alpha-D-glucosamine. Residues 385–386, alanine 422, and arginine 439 each bind acetyl-CoA; that span reads NY.

This sequence in the N-terminal section; belongs to the N-acetylglucosamine-1-phosphate uridyltransferase family. In the C-terminal section; belongs to the transferase hexapeptide repeat family. As to quaternary structure, homotrimer. It depends on Mg(2+) as a cofactor.

It is found in the cytoplasm. It carries out the reaction alpha-D-glucosamine 1-phosphate + acetyl-CoA = N-acetyl-alpha-D-glucosamine 1-phosphate + CoA + H(+). It catalyses the reaction N-acetyl-alpha-D-glucosamine 1-phosphate + UTP + H(+) = UDP-N-acetyl-alpha-D-glucosamine + diphosphate. It participates in nucleotide-sugar biosynthesis; UDP-N-acetyl-alpha-D-glucosamine biosynthesis; N-acetyl-alpha-D-glucosamine 1-phosphate from alpha-D-glucosamine 6-phosphate (route II): step 2/2. The protein operates within nucleotide-sugar biosynthesis; UDP-N-acetyl-alpha-D-glucosamine biosynthesis; UDP-N-acetyl-alpha-D-glucosamine from N-acetyl-alpha-D-glucosamine 1-phosphate: step 1/1. It functions in the pathway bacterial outer membrane biogenesis; LPS lipid A biosynthesis. Its function is as follows. Catalyzes the last two sequential reactions in the de novo biosynthetic pathway for UDP-N-acetylglucosamine (UDP-GlcNAc). The C-terminal domain catalyzes the transfer of acetyl group from acetyl coenzyme A to glucosamine-1-phosphate (GlcN-1-P) to produce N-acetylglucosamine-1-phosphate (GlcNAc-1-P), which is converted into UDP-GlcNAc by the transfer of uridine 5-monophosphate (from uridine 5-triphosphate), a reaction catalyzed by the N-terminal domain. This is Bifunctional protein GlmU from Lactobacillus gasseri (strain ATCC 33323 / DSM 20243 / BCRC 14619 / CIP 102991 / JCM 1131 / KCTC 3163 / NCIMB 11718 / NCTC 13722 / AM63).